The primary structure comprises 245 residues: Carboxy-S-adenosyl-L-methionine synthase (245 aa).

S-adenosyl-L-methionine-binding positions include Tyr-42, 67–69 (GCS), 92–93 (DN), 120–121 (DI), Asn-135, and Arg-202.

Belongs to the class I-like SAM-binding methyltransferase superfamily. Cx-SAM synthase family. As to quaternary structure, homodimer.

It catalyses the reaction prephenate + S-adenosyl-L-methionine = carboxy-S-adenosyl-L-methionine + 3-phenylpyruvate + H2O. Its function is as follows. Catalyzes the conversion of S-adenosyl-L-methionine (SAM) to carboxy-S-adenosyl-L-methionine (Cx-SAM). The polypeptide is Carboxy-S-adenosyl-L-methionine synthase (Vibrio vulnificus (strain CMCP6)).